Here is a 299-residue protein sequence, read N- to C-terminus: Probable plastid-lipid-associated protein 13, chloroplastic (299 aa).

The transit peptide at 1–48 directs the protein to the chloroplast; sequence MALIHGSVPGTSAVRLVFSTSASPSRFCLNVPVVKQGWKNSCRRRVLR. An N-acetylvaline modification is found at Ala2.

It belongs to the PAP/fibrillin family.

It localises to the plastid. The protein resides in the chloroplast. The protein localises to the plastoglobule. This Arabidopsis thaliana (Mouse-ear cress) protein is Probable plastid-lipid-associated protein 13, chloroplastic (PAP13).